Here is a 115-residue protein sequence, read N- to C-terminus: T-cell receptor gamma chain V region V108B (115 aa).

The first 18 residues, Met1–Gly18, serve as a signal peptide directing secretion. Residues Gln19–Ile115 form a v segment region.

The sequence is that of T-cell receptor gamma chain V region V108B (Tcrg-V1) from Mus musculus (Mouse).